Here is a 302-residue protein sequence, read N- to C-terminus: Cyclopropane mycolic acid synthase 2 (302 aa).

S-adenosyl-L-methionine is bound by residues 41 to 42 (YS), 76 to 84 (LLDIGCGWG), 102 to 107 (TLSENQ), and 131 to 132 (WE). Cysteine 284 is a catalytic residue.

Belongs to the CFA/CMAS family. Homodimer.

It localises to the cytoplasm. It carries out the reaction a 1-acyl-2-(9Z)-enoyl-sn-glycero-3-phospholipid + S-adenosyl-L-methionine = a 1-acyl-2-(9-cyclopronane)-acyl-sn-glycero-3-phospholipid + S-adenosyl-L-homocysteine + H(+). It functions in the pathway lipid metabolism; mycolic acid biosynthesis. Its function is as follows. Catalyzes the formation of trans cyclopropanated ketomycolate or methoxymycolate through the conversion of a double bond to a cyclopropane ring at the proximal position of an oxygenated mycolic acid via the transfer of a methylene group from S-adenosyl-L-methionine. In the absence of MmaA2, CmaA2 has a non-specific cis-cyclopropanating activity and is able to catalyze the conversion of a double bond to a cis cyclopropane ring at the distal position of an alpha mycolic acid. Cyclopropanated mycolic acids are key factors participating in cell envelope permeability, host immunomodulation and persistence. The polypeptide is Cyclopropane mycolic acid synthase 2 (cmaA2) (Mycobacterium bovis (strain ATCC BAA-935 / AF2122/97)).